The chain runs to 306 residues: Glutaminase (306 aa).

Substrate contacts are provided by Ser-64, Asn-115, Glu-159, Asn-166, Tyr-190, Tyr-242, and Val-260.

The protein belongs to the glutaminase family. Homotetramer.

The enzyme catalyses L-glutamine + H2O = L-glutamate + NH4(+). In Vibrio vulnificus (strain YJ016), this protein is Glutaminase.